The sequence spans 491 residues: Stromelysin-3 (491 aa).

The signal sequence occupies residues Met1–Ala35. A propeptide spans Arg36–Arg101 (activation peptide). The Cysteine switch motif lies at Leu82–Pro89. Residues Cys84, His168, and Asp170 each contribute to the Zn(2+) site. Asp175, Gly176, Gly178, and Ile180 together coordinate Ca(2+). Residues His183, His196, and His218 each contribute to the Zn(2+) site. Glu219 is an active-site residue. Residues His222 and His228 each coordinate Zn(2+). The disordered stretch occupies residues Tyr260–Gly279. A compositionally biased stretch (low complexity) spans Pro263–Gln277. Cys297 and Cys483 are oxidised to a cystine. Hemopexin repeat units lie at residues Glu298–Leu342, Pro343–Leu385, Gly387–Val435, and Pro436–Cys483.

It belongs to the peptidase M10A family. Ca(2+) serves as cofactor. It depends on Zn(2+) as a cofactor. The precursor is cleaved by a furin endopeptidase. In terms of tissue distribution, highly expressed in ovary and uterus.

The protein resides in the secreted. Its subcellular location is the extracellular space. It localises to the extracellular matrix. Its function is as follows. May play an important role in the progression of epithelial malignancies. The protein is Stromelysin-3 (Mmp11) of Rattus norvegicus (Rat).